The sequence spans 283 residues: Phospholipase C (283 aa).

The signal sequence occupies residues 1 to 24; the sequence is MKKKVLALGAAITLVAPLQSVAFA. Positions 25-38 are excised as a propeptide; that stretch reads HENDGGQRFGVIPR. Zn(2+)-binding residues include tryptophan 39, histidine 52, aspartate 93, histidine 107, histidine 156, aspartate 160, histidine 166, histidine 180, and glutamate 184. Positions 39–283 constitute a Zn-dependent PLC domain; the sequence is WSAEDKHKEG…QLWFDTYGNR (245 aa).

This sequence belongs to the bacterial zinc-metallophospholipase C family. Monomer. It depends on Zn(2+) as a cofactor.

It catalyses the reaction a 1,2-diacyl-sn-glycero-3-phosphocholine + H2O = phosphocholine + a 1,2-diacyl-sn-glycerol + H(+). Required, with sphingomyelinase, to effect target cell lysis (hemolysis). This chain is Phospholipase C (cerA), found in Bacillus cereus.